Consider the following 93-residue polypeptide: Large ribosomal subunit protein uL23cz/uL23cy (93 aa).

Belongs to the universal ribosomal protein uL23 family. In terms of assembly, part of the 50S ribosomal subunit.

The protein localises to the plastid. It localises to the chloroplast. Binds to 23S rRNA. The chain is Large ribosomal subunit protein uL23cz/uL23cy (rpl23-A) from Cucumis sativus (Cucumber).